A 95-amino-acid polypeptide reads, in one-letter code: Aspartyl/glutamyl-tRNA(Asn/Gln) amidotransferase subunit C (95 aa).

This sequence belongs to the GatC family. Heterotrimer of A, B and C subunits.

It catalyses the reaction L-glutamyl-tRNA(Gln) + L-glutamine + ATP + H2O = L-glutaminyl-tRNA(Gln) + L-glutamate + ADP + phosphate + H(+). The catalysed reaction is L-aspartyl-tRNA(Asn) + L-glutamine + ATP + H2O = L-asparaginyl-tRNA(Asn) + L-glutamate + ADP + phosphate + 2 H(+). Its function is as follows. Allows the formation of correctly charged Asn-tRNA(Asn) or Gln-tRNA(Gln) through the transamidation of misacylated Asp-tRNA(Asn) or Glu-tRNA(Gln) in organisms which lack either or both of asparaginyl-tRNA or glutaminyl-tRNA synthetases. The reaction takes place in the presence of glutamine and ATP through an activated phospho-Asp-tRNA(Asn) or phospho-Glu-tRNA(Gln). This is Aspartyl/glutamyl-tRNA(Asn/Gln) amidotransferase subunit C from Prochlorococcus marinus (strain NATL1A).